A 388-amino-acid polypeptide reads, in one-letter code: Succinate--CoA ligase [ADP-forming] subunit beta (388 aa).

An ATP-grasp domain is found at 9–244 (KQLFAEFGLP…PSQEDKREAH (236 aa)). Residues Lys-46, 53–55 (GRG), Glu-99, Ser-102, and Glu-107 each bind ATP. 2 residues coordinate Mg(2+): Asn-199 and Asp-213. Residues Asn-264 and 321-323 (GIV) contribute to the substrate site.

The protein belongs to the succinate/malate CoA ligase beta subunit family. In terms of assembly, heterotetramer of two alpha and two beta subunits. Requires Mg(2+) as cofactor.

It carries out the reaction succinate + ATP + CoA = succinyl-CoA + ADP + phosphate. The catalysed reaction is GTP + succinate + CoA = succinyl-CoA + GDP + phosphate. The protein operates within carbohydrate metabolism; tricarboxylic acid cycle; succinate from succinyl-CoA (ligase route): step 1/1. Functionally, succinyl-CoA synthetase functions in the citric acid cycle (TCA), coupling the hydrolysis of succinyl-CoA to the synthesis of either ATP or GTP and thus represents the only step of substrate-level phosphorylation in the TCA. The beta subunit provides nucleotide specificity of the enzyme and binds the substrate succinate, while the binding sites for coenzyme A and phosphate are found in the alpha subunit. The sequence is that of Succinate--CoA ligase [ADP-forming] subunit beta from Vibrio vulnificus (strain CMCP6).